We begin with the raw amino-acid sequence, 110 residues long: Quaternary ammonium compound-resistance protein QacF (110 aa).

A run of 4 helical transmembrane segments spans residues 1-21 (MKNW…TSAL), 31-51 (VPSV…SLAL), 58-78 (IAYA…AWIF), and 85-105 (FWAF…NLLS).

This sequence belongs to the drug/metabolite transporter (DMT) superfamily. Small multidrug resistance (SMR) (TC 2.A.7.1) family.

It is found in the cell membrane. Functionally, multidrug exporter. Is implicated for the resistance to bacteriocidal quaternary ammonium compounds. The polypeptide is Quaternary ammonium compound-resistance protein QacF (qacF) (Klebsiella aerogenes (Enterobacter aerogenes)).